A 420-amino-acid chain; its full sequence is Deoxyribodipyrimidine photo-lyase (420 aa).

The Photolyase/cryptochrome alpha/beta domain maps to 2–124 (GPLLVWHRGD…PLHLLPAPHL (123 aa)). Positions 147-176 (APPLPPPEALPKGPEEGEIPREDPGLPLPE) are disordered. Residues 159–170 (GPEEGEIPREDP) are compositionally biased toward basic and acidic residues. Tyr197 serves as a coordination point for FAD. Arg201 serves as a coordination point for DNA. FAD is bound by residues 209-213 (GSRLS), Trp241, Arg248, Asn310, and 341-343 (DGD). Interaction with DNA stretches follow at residues 244–251 (ELLWRDFS) and 310–311 (NR). Position 373 (Gln373) interacts with DNA.

The protein belongs to the DNA photolyase class-1 family. Monomer. It depends on FAD as a cofactor.

It carries out the reaction cyclobutadipyrimidine (in DNA) = 2 pyrimidine residues (in DNA).. In terms of biological role, involved in repair of UV radiation-induced DNA damage. Catalyzes the light-dependent monomerization (300-600 nm) of cyclobutyl pyrimidine dimers (in cis-syn configuration), which are formed between adjacent bases on the same DNA strand upon exposure to ultraviolet radiation. The polypeptide is Deoxyribodipyrimidine photo-lyase (phr) (Thermus thermophilus (strain ATCC 27634 / DSM 579 / HB8)).